A 75-amino-acid chain; its full sequence is MADVLDQLNEREEALLQNILAPHLDTELSDDEVDAIAEAGRQCSECGLPIPTTRLRANPFAHRCVSCQQDWEEGR.

The dksA C4-type zinc-finger motif lies at 43 to 67 (CSECGLPIPTTRLRANPFAHRCVSC).

This is an uncharacterized protein from Haemophilus influenzae (strain ATCC 51907 / DSM 11121 / KW20 / Rd).